A 226-amino-acid chain; its full sequence is Cytidylate kinase (226 aa).

14 to 22 (GPAGAGKST) is a binding site for ATP.

The protein belongs to the cytidylate kinase family. Type 1 subfamily.

It localises to the cytoplasm. It catalyses the reaction CMP + ATP = CDP + ADP. The enzyme catalyses dCMP + ATP = dCDP + ADP. The protein is Cytidylate kinase of Symbiobacterium thermophilum (strain DSM 24528 / JCM 14929 / IAM 14863 / T).